The following is a 263-amino-acid chain: MAVPIALTIAGSDSGGGAGIQADLRTFAFHQVHGTCAITCVTAQNTLGVTRVDAIAPAGVAAQLDAVLSDLPPQALKTGMLLNAEIMEVVAGTIAPLFIPRIIDPVMVSRTGAVLIDQAAIAVLRDHLLPLATVLTPNRYEAQLLAGMDIQDAADLDRAARIIRDLGPQAVLIKGGAATGDWHGVDWWWDGQQSHILKTEAIATPHTHGSGCTLAAAIAANAALGLEILAAAQAAKHYVTKALRHSLAIGQGQGPLGHFYPLF.

Gln44 lines the 4-amino-5-hydroxymethyl-2-methylpyrimidine pocket.

Belongs to the ThiD family.

The catalysed reaction is 4-amino-5-hydroxymethyl-2-methylpyrimidine + ATP = 4-amino-2-methyl-5-(phosphooxymethyl)pyrimidine + ADP + H(+). It catalyses the reaction 4-amino-2-methyl-5-(phosphooxymethyl)pyrimidine + ATP = 4-amino-2-methyl-5-(diphosphooxymethyl)pyrimidine + ADP. Its pathway is cofactor biosynthesis; thiamine diphosphate biosynthesis; 4-amino-2-methyl-5-diphosphomethylpyrimidine from 5-amino-1-(5-phospho-D-ribosyl)imidazole: step 2/3. It participates in cofactor biosynthesis; thiamine diphosphate biosynthesis; 4-amino-2-methyl-5-diphosphomethylpyrimidine from 5-amino-1-(5-phospho-D-ribosyl)imidazole: step 3/3. Functionally, catalyzes the phosphorylation of hydroxymethylpyrimidine phosphate (HMP-P) to HMP-PP, and of HMP to HMP-P. The chain is Hydroxymethylpyrimidine/phosphomethylpyrimidine kinase (thiD) from Synechococcus elongatus (strain ATCC 33912 / PCC 7942 / FACHB-805) (Anacystis nidulans R2).